Consider the following 88-residue polypeptide: Small ribosomal subunit protein bS20 (88 aa).

Belongs to the bacterial ribosomal protein bS20 family.

Binds directly to 16S ribosomal RNA. In Bradyrhizobium diazoefficiens (strain JCM 10833 / BCRC 13528 / IAM 13628 / NBRC 14792 / USDA 110), this protein is Small ribosomal subunit protein bS20.